Here is a 329-residue protein sequence, read N- to C-terminus: DNA-directed RNA polymerase subunit alpha (329 aa).

An alpha N-terminal domain (alpha-NTD) region spans residues 1–235 (MQGSVTEFLK…EQLEAFVDLR (235 aa)). The segment at 249-329 (FDPILLRPVD…NWPPASIADE (81 aa)) is alpha C-terminal domain (alpha-CTD).

The protein belongs to the RNA polymerase alpha chain family. In terms of assembly, homodimer. The RNAP catalytic core consists of 2 alpha, 1 beta, 1 beta' and 1 omega subunit. When a sigma factor is associated with the core the holoenzyme is formed, which can initiate transcription.

It catalyses the reaction RNA(n) + a ribonucleoside 5'-triphosphate = RNA(n+1) + diphosphate. In terms of biological role, DNA-dependent RNA polymerase catalyzes the transcription of DNA into RNA using the four ribonucleoside triphosphates as substrates. The sequence is that of DNA-directed RNA polymerase subunit alpha from Sodalis glossinidius (strain morsitans).